Reading from the N-terminus, the 1087-residue chain is Transcription factor AP2-Z (1087 aa).

The segment at residues 586-682 (GRVYKVIVRG…IKYNSVPDSL (97 aa)) is a DNA-binding region (AP2).

Belongs to the AP2/ERF transcription factor family. AP2 subfamily.

The protein resides in the nucleus. Its subcellular location is the chromosome. Transcription factor which binds the 5'-[TC][AC]TG[AT]AC[AG]-3' motif. During the mosquito vector stage, plays an essential role in the zygote for de novo transcription of genes required for ookinete formation. The protein is Transcription factor AP2-Z of Plasmodium berghei (strain Anka).